A 338-amino-acid polypeptide reads, in one-letter code: Beta-ketoacyl-[acyl-carrier-protein] synthase III (338 aa).

Catalysis depends on residues Cys-119 and His-261. Positions 262–266 (QANQR) are ACP-binding. The active site involves Asn-291.

Belongs to the thiolase-like superfamily. FabH family. In terms of assembly, homodimer.

Its subcellular location is the cytoplasm. It carries out the reaction malonyl-[ACP] + acetyl-CoA + H(+) = 3-oxobutanoyl-[ACP] + CO2 + CoA. Its pathway is lipid metabolism; fatty acid biosynthesis. Catalyzes the condensation reaction of fatty acid synthesis by the addition to an acyl acceptor of two carbons from malonyl-ACP. Catalyzes the first condensation reaction which initiates fatty acid synthesis and may therefore play a role in governing the total rate of fatty acid production. Possesses both acetoacetyl-ACP synthase and acetyl transacylase activities. Its substrate specificity determines the biosynthesis of branched-chain and/or straight-chain of fatty acids. The protein is Beta-ketoacyl-[acyl-carrier-protein] synthase III of Prochlorococcus marinus (strain NATL2A).